Here is a 101-residue protein sequence, read N- to C-terminus: NADH-quinone oxidoreductase subunit K (101 aa).

A run of 3 helical transmembrane segments spans residues 2-22 (ISLN…LVGV), 29-49 (IMLF…LVAI), and 63-83 (MFII…LILW).

Belongs to the complex I subunit 4L family. In terms of assembly, NDH-1 is composed of 14 different subunits. Subunits NuoA, H, J, K, L, M, N constitute the membrane sector of the complex.

It localises to the cell inner membrane. The catalysed reaction is a quinone + NADH + 5 H(+)(in) = a quinol + NAD(+) + 4 H(+)(out). Its function is as follows. NDH-1 shuttles electrons from NADH, via FMN and iron-sulfur (Fe-S) centers, to quinones in the respiratory chain. The immediate electron acceptor for the enzyme in this species is believed to be ubiquinone. Couples the redox reaction to proton translocation (for every two electrons transferred, four hydrogen ions are translocated across the cytoplasmic membrane), and thus conserves the redox energy in a proton gradient. This chain is NADH-quinone oxidoreductase subunit K, found in Campylobacter hominis (strain ATCC BAA-381 / DSM 21671 / CCUG 45161 / LMG 19568 / NCTC 13146 / CH001A).